Reading from the N-terminus, the 120-residue chain is DNA-directed RNA polymerase II subunit rpb11 (120 aa).

Belongs to the archaeal Rpo11/eukaryotic RPB11/RPC19 RNA polymerase subunit family. In terms of assembly, component of the RNA polymerase II (Pol II) complex consisting of 12 subunits.

Its subcellular location is the nucleus. Its function is as follows. DNA-dependent RNA polymerase catalyzes the transcription of DNA into RNA using the four ribonucleoside triphosphates as substrates. Component of RNA polymerase II which synthesizes mRNA precursors and many functional non-coding RNAs. Pol II is the central component of the basal RNA polymerase II transcription machinery. It is composed of mobile elements that move relative to each other. RPB11 is part of the core element with the central large cleft. The polypeptide is DNA-directed RNA polymerase II subunit rpb11 (polr2j) (Dictyostelium discoideum (Social amoeba)).